We begin with the raw amino-acid sequence, 156 residues long: Deoxyuridine 5'-triphosphate nucleotidohydrolase (156 aa).

Residues R76 to G78, N89, T93 to D95, and K103 each bind substrate.

It belongs to the dUTPase family. Requires Mg(2+) as cofactor.

It carries out the reaction dUTP + H2O = dUMP + diphosphate + H(+). Its pathway is pyrimidine metabolism; dUMP biosynthesis; dUMP from dCTP (dUTP route): step 2/2. This enzyme is involved in nucleotide metabolism: it produces dUMP, the immediate precursor of thymidine nucleotides and it decreases the intracellular concentration of dUTP so that uracil cannot be incorporated into DNA. The chain is Deoxyuridine 5'-triphosphate nucleotidohydrolase from Rhizobium leguminosarum bv. trifolii (strain WSM2304).